A 101-amino-acid chain; its full sequence is Small ribosomal subunit protein uS14A (101 aa).

Positions alanine 47–leucine 66 are disordered.

The protein belongs to the universal ribosomal protein uS14 family. Part of the 30S ribosomal subunit. Contacts proteins S3 and S10.

Its function is as follows. Binds 16S rRNA, required for the assembly of 30S particles and may also be responsible for determining the conformation of the 16S rRNA at the A site. The sequence is that of Small ribosomal subunit protein uS14A from Myxococcus xanthus (strain DK1622).